The primary structure comprises 75 residues: Defensin J1-1 (75 aa).

The first 27 residues, 1–27 (MAGFSKVVATIFLMMLLVFATDMMAEA), serve as a signal peptide directing secretion. 4 cysteine pairs are disulfide-bonded: Cys-30-Cys-74, Cys-41-Cys-61, Cys-47-Cys-68, and Cys-51-Cys-70.

Belongs to the DEFL family. In terms of assembly, monomer. Expressed in orange and red ripe fruit and to a lesser extent in mature, green fruit. Present in trace in young, green fruit.

The protein resides in the secreted. In terms of biological role, plant defense peptide with antifungal activity against F.oxysporum and B.cinerea. This Capsicum annuum (Capsicum pepper) protein is Defensin J1-1.